The following is a 167-amino-acid chain: Thiol peroxidase (167 aa).

In terms of domain architecture, Thioredoxin spans 18–167 (VKVGDQAPDF…PIEAAKALVK (150 aa)). Cysteine 60 functions as the Cysteine sulfenic acid (-SOH) intermediate in the catalytic mechanism. Residues cysteine 60 and cysteine 94 are joined by a disulfide bond.

Belongs to the peroxiredoxin family. Tpx subfamily. In terms of assembly, homodimer.

The enzyme catalyses a hydroperoxide + [thioredoxin]-dithiol = an alcohol + [thioredoxin]-disulfide + H2O. Thiol-specific peroxidase that catalyzes the reduction of hydrogen peroxide and organic hydroperoxides to water and alcohols, respectively. Plays a role in cell protection against oxidative stress by detoxifying peroxides. The protein is Thiol peroxidase of Bacillus subtilis (strain 168).